The following is a 71-amino-acid chain: uncharacterized protein (71 aa).

Belongs to the varicellovirus ORF57 protein family.

This is an uncharacterized protein from Homo sapiens (Human).